The chain runs to 35 residues: Coenzyme PQQ synthesis protein A (35 aa).

The segment at residues Glu-16–Tyr-20 is a cross-link (pyrroloquinoline quinone (Glu-Tyr)).

The protein belongs to the PqqA family.

It functions in the pathway cofactor biosynthesis; pyrroloquinoline quinone biosynthesis. In terms of biological role, required for coenzyme pyrroloquinoline quinone (PQQ) biosynthesis. PQQ is probably formed by cross-linking a specific glutamate to a specific tyrosine residue and excising these residues from the peptide. The polypeptide is Coenzyme PQQ synthesis protein A (Roseobacter denitrificans (strain ATCC 33942 / OCh 114) (Erythrobacter sp. (strain OCh 114))).